We begin with the raw amino-acid sequence, 186 residues long: Lipid A palmitoyltransferase PagP (186 aa).

The signal sequence occupies residues 1–25 (MNVSKYVAIFFFVFIQLISVGKVFA). Active-site residues include His58, Asp101, and Ser102.

Belongs to the lipid A palmitoyltransferase family. In terms of assembly, homodimer.

The protein resides in the cell outer membrane. It catalyses the reaction lipid A (E. coli) + a 1-hexadecanoyl-2-acyl-sn-glycero-3-phosphocholine = hepta-acyl lipid A (E. coli) + a 2-acyl-sn-glycero-3-phosphocholine. The enzyme catalyses lipid IIA + a 1-hexadecanoyl-2-acyl-sn-glycero-3-phosphocholine = lipid IIB + a 2-acyl-sn-glycero-3-phosphocholine. The catalysed reaction is lipid IVA (E. coli) + a 1-hexadecanoyl-2-acyl-sn-glycero-3-phosphocholine = lipid IVB (E. coli) + a 2-acyl-sn-glycero-3-phosphocholine. Transfers a palmitate residue from the sn-1 position of a phospholipid to the N-linked hydroxymyristate on the proximal unit of lipid A or its precursors. The chain is Lipid A palmitoyltransferase PagP from Escherichia coli O6:H1 (strain CFT073 / ATCC 700928 / UPEC).